Here is a 204-residue protein sequence, read N- to C-terminus: MKKIAVTCALLSAFAVSSVWADAAGDLKSRLDKVSSFHASFTQKVTDGSGAAVQEGQGDLWVKRPNLFNWHMTQPDESVLISDGKTLWFYNPFVEQASATWLKDATSNTPFMLIARNQSSDWQQYNIKQNGDDFVLTPKSASGNLKQFTINVSRDGTINQFSAVEQDDQRSSYQLKSQQNGAVDMSKFTFTPPQGVTVDDQRNK.

The signal sequence occupies residues 1–21 (MKKIAVTCALLSAFAVSSVWA). The tract at residues 169-204 (QRSSYQLKSQQNGAVDMSKFTFTPPQGVTVDDQRNK) is disordered. Polar residues predominate over residues 171 to 181 (SSYQLKSQQNG).

This sequence belongs to the LolA family. In terms of assembly, monomer.

Its subcellular location is the periplasm. Participates in the translocation of lipoproteins from the inner membrane to the outer membrane. Only forms a complex with a lipoprotein if the residue after the N-terminal Cys is not an aspartate (The Asp acts as a targeting signal to indicate that the lipoprotein should stay in the inner membrane). In Cronobacter sakazakii (strain ATCC BAA-894) (Enterobacter sakazakii), this protein is Outer-membrane lipoprotein carrier protein.